Here is a 186-residue protein sequence, read N- to C-terminus: Ras-related protein rapA (186 aa).

Gly-12–Ser-19 is a GTP binding site. The Effector region signature appears at Tyr-34–Tyr-42. GTP is bound by residues Asp-59–Thr-63 and Asn-118–Asp-121. A Cysteine methyl ester modification is found at Cys-183. The S-geranylgeranyl cysteine moiety is linked to residue Cys-183. Residues Ala-184–Leu-186 constitute a propeptide, removed in mature form.

The protein belongs to the small GTPase superfamily. Ras family. In terms of assembly, interacts with ralGDS (only when rapA is in its GTP-bound state). Interacts with the Rap guanine nucleotide exchange factor glfB.

It localises to the cell membrane. The catalysed reaction is GTP + H2O = GDP + phosphate + H(+). In terms of biological role, g protein of the Ras family that positively regulates phagocytosis and negatively regulates macropinocytosis. May be involved in the activation of guanylyl cyclase during the response to hyperosmotic conditions. Overexpressing cells generate alterations in cell shape and contractile responses. Involved in chemotaxis via regulation of the balance of Ras and Rap signaling at the leading edge of chemotaxing cells. The protein is Ras-related protein rapA (rapA) of Dictyostelium discoideum (Social amoeba).